The primary structure comprises 404 residues: Serine/threonine-protein kinase UCN (404 aa).

A Protein kinase domain is found at 22–340 (LKVLKLLGKG…AAEIKEHAFF (319 aa)). ATP contacts are provided by residues 28–36 (LGKGATGTV) and Lys55. The active-site Proton acceptor is Asp153. A disordered region spans residues 185–207 (EFYHLSDPEPDPNPESNLSHNKK). Residues 341 to 404 (KGVRWELLTE…CSENNPFVDF (64 aa)) enclose the AGC-kinase C-terminal domain.

Belongs to the protein kinase superfamily. AGC Ser/Thr protein kinase family. As to expression, expressed in the epidermis and cortex of the transition zone of the root apex and developing flowers. Expressed in rosette leaves, stems and siliques.

The protein resides in the cytoplasm. The protein localises to the nucleus. It catalyses the reaction L-seryl-[protein] + ATP = O-phospho-L-seryl-[protein] + ADP + H(+). The catalysed reaction is L-threonyl-[protein] + ATP = O-phospho-L-threonyl-[protein] + ADP + H(+). Its function is as follows. Regulates planar ovule integument development by suppressing aberrantly oriented growth. Maintains planar growth of integuments by repressing the developmental regulator and transcription factor KAN4 which is involved in the control of early integument growth and polarity. Restricts growth in stamen filaments, petals, and cotyledons. In Arabidopsis thaliana (Mouse-ear cress), this protein is Serine/threonine-protein kinase UCN.